The chain runs to 1675 residues: Clathrin heavy chain 1 (1675 aa).

An N-acetylalanine modification is found at Ala2. Residues Ala2 to Tyr479 are globular terminal domain. WD40-like repeat stretches follow at residues Asn24–Ser67, Ala68–Asp107, Val108–Ala149, Gly150–Glu195, Gly196–Gln257, Asn258–Glu301, and Thr302–Glu330. At Ser67 the chain carries Phosphoserine. The residue at position 105 (Thr105) is a Phosphothreonine. Position 184 is a phosphotyrosine (Tyr184). Phosphothreonine is present on Thr394. Residues Glu449 to Asp465 are binding site for the uncoating ATPase, involved in lattice disassembly. Positions Leu480–Arg523 are flexible linker. The tract at residues Ile524–Tyr634 is distal segment. A heavy chain arm region spans residues Ile524 to Met1675. CHCR repeat units lie at residues Val537 to Val683, Ala686 to Val828, Ile833 to Asp972, Leu979 to Ala1124, Tyr1128 to Ala1269, Leu1274 to Asn1420, and Leu1423 to Phe1566. The residue at position 634 (Tyr634) is a Phosphotyrosine. A proximal segment region spans residues Ala639 to Met1675. An N6-succinyllysine modification is found at Lys737. N6-acetyllysine is present on Lys856. Tyr899 carries the post-translational modification Phosphotyrosine. Ser1167 is subject to Phosphoserine. Tyr1206 carries the post-translational modification Phosphotyrosine. The involved in binding clathrin light chain stretch occupies residues Ala1213–Lys1522. Ser1229 carries the post-translational modification Phosphoserine. Residue Lys1441 is modified to N6-acetyllysine; alternate. Lys1441 is subject to N6-succinyllysine; alternate. Phosphotyrosine is present on residues Tyr1477 and Tyr1487. A Phosphoserine modification is found at Ser1494. At Lys1501 the chain carries N6-acetyllysine. A trimerization region spans residues Ala1550–Met1675.

The protein belongs to the clathrin heavy chain family. As to quaternary structure, clathrin triskelions, composed of 3 heavy chains and 3 light chains, are the basic subunits of the clathrin coat. In the presence of light chains, hub assembly is influenced by both the pH and the concentration of calcium. Interacts with HIP1. Interacts with DENND1A, DENND1B and DENND1C. Interacts with ERBB2. Interacts with FKBP6. Interacts with OCRL. Interacts with CKAP5 and TACC3 forming the TACC3/ch-TOG/clathrin complex located at spindle inter-microtubules bridges; the complex implicates clathrin triskelions; TACC3 and CLTC are proposed to form a composite microtubule interaction surface. Plays a role in early autophagosome formation. Interacts with ATG16L1 (via N-terminus). Interacts with RFTN1; the interaction occurs in response to pathogens. Interacts with USP2 isoform 2. Interacts with TMEM106B (via N-terminus). Interacts with DNAJC6; this interaction produces a local change in heavy-chain contacts, creating a detectable global distortion of the clathrin coat and leads to the recruitment of HSPA8.

It is found in the cytoplasmic vesicle membrane. Its subcellular location is the membrane. The protein localises to the coated pit. The protein resides in the melanosome. It localises to the cytoplasm. It is found in the cytoskeleton. Its subcellular location is the spindle. Clathrin is the major protein of the polyhedral coat of coated pits and vesicles. Two different adapter protein complexes link the clathrin lattice either to the plasma membrane or to the trans-Golgi network. Acts as a component of the TACC3/ch-TOG/clathrin complex proposed to contribute to stabilization of kinetochore fibers of the mitotic spindle by acting as inter-microtubule bridge. The TACC3/ch-TOG/clathrin complex is required for the maintenance of kinetochore fiber tension. Plays a role in early autophagosome formation. Interaction with DNAJC6 mediates the recruitment of HSPA8 to the clathrin lattice and creates local destabilization of the lattice promoting uncoating. The protein is Clathrin heavy chain 1 of Mus musculus (Mouse).